A 302-amino-acid chain; its full sequence is MPCVGLIVNDGKELAVETALTLQSRLEQAGIEVVRASSSGGMVGFANPDQHLRLLGYNACVPEGFDASMALAIVLGGDGTVLSAARQTAPVQVPILTINTGHLGFLAEAYLADLDRVIEQVLNKQWTIEERCTLVVSVLRGDQCRWEALSLNEMALHREPLTSMCHFEVAIGRHAPVDISADGVILSTPTGSTAYALSAGGPVITPECPVLQLAPIAPHSLASRALVFSDQEPVTVFPATADRLMMVVDGSAGCYVWPEDRVLIRRSDHPVRFVRLADHEFFQVLRNKLGWGLPHVAKPDRP.

The active-site Proton acceptor is aspartate 78. NAD(+) contacts are provided by residues 78-79 (DG), 152-153 (NE), aspartate 182, 193-198 (TAYALS), and alanine 217.

Belongs to the NAD kinase family. The cofactor is a divalent metal cation.

It localises to the cytoplasm. The enzyme catalyses NAD(+) + ATP = ADP + NADP(+) + H(+). Its function is as follows. Involved in the regulation of the intracellular balance of NAD and NADP, and is a key enzyme in the biosynthesis of NADP. Catalyzes specifically the phosphorylation on 2'-hydroxyl of the adenosine moiety of NAD to yield NADP. This Prochlorococcus marinus (strain MIT 9313) protein is NAD kinase 2.